The following is a 623-amino-acid chain: Sterol O-acyltransferase 1 (623 aa).

The interval Asn-20–Asp-99 is disordered. Positions Ala-57–Ala-72 are enriched in low complexity. Acidic residues predominate over residues Asp-83–Ala-92. Helical transmembrane passes span Leu-195–Phe-215, Leu-242–Val-262, Gly-277–Val-297, Ile-384–Tyr-404, and Ile-422–Met-442. Positions Phe-504–Asn-510 match the FYXDWWN motif motif. Transmembrane regions (helical) follow at residues Ala-548 to Phe-568 and Val-603 to Leu-623. The active site involves His-560.

Belongs to the membrane-bound acyltransferase family. Sterol o-acyltransferase subfamily.

It is found in the endoplasmic reticulum membrane. Sterol O-acyltransferase that catalyzes the formation of stery esters. The protein is Sterol O-acyltransferase 1 (ARE1) of Saccharomyces uvarum (strain ATCC 76518 / CBS 7001 / CLIB 283 / NBRC 10550 / MCYC 623 / NCYC 2669 / NRRL Y-11845) (Yeast).